We begin with the raw amino-acid sequence, 276 residues long: Large ribosomal subunit protein uL2 (276 aa).

Disordered stretches follow at residues 1–20 (MGIK…TTND) and 219–276 (TVRG…RRKK). The span at 7–20 (NPTTNGRRNMTTND) shows a compositional bias: polar residues.

Belongs to the universal ribosomal protein uL2 family. Part of the 50S ribosomal subunit. Forms a bridge to the 30S subunit in the 70S ribosome.

Functionally, one of the primary rRNA binding proteins. Required for association of the 30S and 50S subunits to form the 70S ribosome, for tRNA binding and peptide bond formation. It has been suggested to have peptidyltransferase activity; this is somewhat controversial. Makes several contacts with the 16S rRNA in the 70S ribosome. This is Large ribosomal subunit protein uL2 from Bacillus mycoides (strain KBAB4) (Bacillus weihenstephanensis).